Here is an 833-residue protein sequence, read N- to C-terminus: Serine-rich coiled-coil domain-containing protein 2 (833 aa).

Residues Asn178–Asn208 are disordered. The segment covering Ser191–Asn208 has biased composition (polar residues). Ser222 bears the Phosphoserine mark. Disordered stretches follow at residues Leu321–Met345, Asn424–Pro452, Lys478–Gly508, and Asp602–Leu631. Ser451 carries the post-translational modification Phosphoserine. The span at Ser496 to Ser506 shows a compositional bias: low complexity. Residues Leu606–His615 are compositionally biased toward basic residues. A coiled-coil region spans residues Asp711–Arg747. Residues Phe789 to Gln833 are disordered. The segment covering Thr803 to Gln814 has biased composition (polar residues).

Belongs to the CCSER family. As to expression, expressed in brain (at protein level).

It localises to the cytoplasm. The protein resides in the cytoskeleton. In terms of biological role, microtubule-binding protein which might play a role in microtubule bundling. The sequence is that of Serine-rich coiled-coil domain-containing protein 2 (Ccser2) from Mus musculus (Mouse).